Here is a 4486-residue protein sequence, read N- to C-terminus: Dynein axonemal heavy chain 9 (4486 aa).

The interval 1–1831 (MRLAEERAAL…FANICDAQFL (1831 aa)) is stem. 5 coiled-coil regions span residues 381-410 (DLLR…EFQD), 504-529 (QSTD…LGTI), 639-662 (AEGK…ETRL), 752-823 (TLLE…TWVT), and 1326-1355 (NINV…AWDA). 4 AAA regions span residues 1832-2053 (YSYE…VLVV), 2113-2334 (ALVR…TRFK), 2440-2688 (EFDP…IFQG), and 2787-3036 (NHNE…EQRY). ATP-binding positions include 1870 to 1877 (GPAGTGKT), 2151 to 2158 (GGAGTGKS), 2478 to 2485 (GTAGTGKS), and 2825 to 2832 (GVGGSGKQ). 3 coiled-coil regions span residues 3051-3154 (YQSL…AKAE), 3285-3341 (KRQA…AEVT), and 3640-3675 (LVEN…REHY). The interval 3051–3341 (YQSLLHRHRK…LKCQQEAEVT (291 aa)) is stalk. 2 AAA regions span residues 3429–3656 (LMDD…EVEK) and 3866–4092 (LRDF…VLYN).

The protein belongs to the dynein heavy chain family. As to quaternary structure, consists of at least two heavy chains and a number of intermediate and light chains. Interacts with ODAD1. Expressed in upper and lower respiratory airway epithelia (at protein level). Not detected in spermatozoa (at protein level).

The protein localises to the cytoplasm. It localises to the cytoskeleton. Its subcellular location is the cilium axoneme. Its function is as follows. Force generating protein required for cilia beating in respiratory epithelia. Produces force towards the minus ends of microtubules. Dynein has ATPase activity; the force-producing power stroke is thought to occur on release of ADP. The chain is Dynein axonemal heavy chain 9 from Homo sapiens (Human).